The chain runs to 147 residues: UPF0306 protein YE0465 (147 aa).

The protein belongs to the UPF0306 family.

This chain is UPF0306 protein YE0465, found in Yersinia enterocolitica serotype O:8 / biotype 1B (strain NCTC 13174 / 8081).